The sequence spans 445 residues: Fatty acid desaturase 3 (445 aa).

Residues 1 to 21 are disordered; sequence MGGVGEPGPREGPAQPGAPLP. At 1–133 the chain is on the cytoplasmic side; the sequence is MGGVGEPGPR…DMKLFDASPT (133 aa). Residues 20-97 form the Cytochrome b5 heme-binding domain; that stretch reads LPTFCWEQIR…LQPLLIGELA (78 aa). The chain crosses the membrane as a helical span at residues 134-154; it reads FFAFLLGHILAMEVLAWLLIY. At 155 to 159 the chain is on the lumenal side; the sequence is LLGPG. A helical transmembrane segment spans residues 160–180; it reads WVPSALAAFILAISQAQSWCL. Residues 181-263 lie on the Cytoplasmic side of the membrane; it reads QHDLGHASIF…KRRYLPYNQQ (83 aa). The Histidine box-1 signature appears at 182–186; the sequence is HDLGH. Positions 219-223 match the Histidine box-2 motif; the sequence is HFQHH. Residues 264–284 traverse the membrane as a helical segment; it reads HLYFFLIGPPLLTLVNFEVEN. At 285–306 the chain is on the lumenal side; it reads LAYMLVCMQWADLLWAASFYAR. A helical membrane pass occupies residues 307–327; that stretch reads FFLSYLPFYGVPGVLLFFVAV. The Cytoplasmic portion of the chain corresponds to 328–445; it reads RVLESHWFVW…DIWLDAYLHQ (118 aa). Residues 383–387 carry the Histidine box-3 motif; it reads QIEHH.

The protein belongs to the fatty acid desaturase type 1 family. Highly expressed in various organs and tissues including liver, kidney, brain, lung, pancreas, testis, ovary and skeletal muscle (at protein level).

Its subcellular location is the endoplasmic reticulum membrane. The catalysed reaction is an N-acylsphing-4-enine + 2 Fe(II)-[cytochrome b5] + O2 + 2 H(+) = an N-acyl-sphinga-4E,14Z-dienine + 2 Fe(III)-[cytochrome b5] + 2 H2O. The enzyme catalyses N-(hexanoyl)sphing-4-enine + 2 Fe(II)-[cytochrome b5] + O2 + 2 H(+) = N-hexanoyl-sphinga-4E,14Z-dienine + 2 Fe(III)-[cytochrome b5] + 2 H2O. It carries out the reaction sphing-4-enine + 2 Fe(II)-[cytochrome b5] + O2 + 2 H(+) = sphinga-4E,14Z-dienine + 2 Fe(III)-[cytochrome b5] + 2 H2O. It catalyses the reaction (11E)-octadecenoyl-CoA + 2 Fe(II)-[cytochrome b5] + O2 + 2 H(+) = (11E,13Z)-octadecadienoyl-CoA + 2 Fe(III)-[cytochrome b5] + 2 H2O. The catalysed reaction is N-acyl-1-deoxysphinganine + 2 Fe(II)-[cytochrome b5] + O2 + 2 H(+) = N-acyl-1-deoxysphing-14Z-enine + 2 Fe(III)-[cytochrome b5] + 2 H2O. The enzyme catalyses an N-acylsphinganine + 2 Fe(II)-[cytochrome b5] + O2 + 2 H(+) = an N-acylsphing-14Z-enine + 2 Fe(III)-[cytochrome b5] + 2 H2O. The protein operates within lipid metabolism; sphingolipid metabolism. It participates in lipid metabolism; polyunsaturated fatty acid biosynthesis. In terms of biological role, mammals have different sphingoid bases that differ in their length and/or pattern of desaturation and hydroxyl groups. The predominant sphingoid base that comprises mammalian ceramides is sphing-4-enine (sphingosine or SPH) which has a trans (E) desaturation at carbon 4. FADS3 is a desaturase that introduces a cis (Z) double bond between carbon 14 and carbon 15 of the sphingoid base (also known as long chain base, LCB), producing LCBs such as sphinga-4,14-dienine (SPD, d18:2(4E,14Z)) from SPH. Prefers SPH-containing ceramides (N-acylsphing-4-enines) as substrates. Capable of metabolizing also the SPH in its free form. SPD ceramides occur widely in mammalian tissues and cells. Due to their unusual structure containing a cis double bond, SPD ceramides may have an opposite, negative role in lipid microdomain formation relative to conventional ceramides. Could be involved in the detoxification of 1-deoxy sphingolipids, by desaturating the cytotoxic 1-deoxysphinganine (1-deoxySA, m18:0), produced under pathological conditions, to 1-deoxysphingenine (1-deoxysphingosine, 1-deoxySO, m18:1). Although prefers SPH-containing ceramides (N-acylsphing-4-enines) as substrates, it also exhibits activity toward dihydrosphingosine-containing CERs (N-acylsphinganines) and produces 14Z-SPH-containing sphingolipids,which can be found in patients with DEGS1 mutations. Its desaturase mechanism involves an electron transfer facilitated by cytochrome b5. FADS3 also acts as a methyl-end fatty acyl coenzyme A (CoA) desaturase that introduces a cis double bond between the preexisting double bond and the terminal methyl group of the fatty acyl chain. Desaturates (11E)-octadecenoate (trans-vaccenoate, the predominant trans fatty acid in human milk) at carbon 13 to generate (11E,13Z)-octadecadienoate (also known as conjugated linoleic acid 11E,13Z-CLA). This chain is Fatty acid desaturase 3, found in Homo sapiens (Human).